The sequence spans 219 residues: Ribonuclease HII (219 aa).

Positions 10 to 219 (HLEAGTDEAG…LLPEQTVLDL (210 aa)) constitute an RNase H type-2 domain. 3 residues coordinate a divalent metal cation: aspartate 16, glutamate 17, and aspartate 108.

The protein belongs to the RNase HII family. Mn(2+) is required as a cofactor. Mg(2+) serves as cofactor.

It is found in the cytoplasm. The enzyme catalyses Endonucleolytic cleavage to 5'-phosphomonoester.. Endonuclease that specifically degrades the RNA of RNA-DNA hybrids. In Flavobacterium psychrophilum (strain ATCC 49511 / DSM 21280 / CIP 103535 / JIP02/86), this protein is Ribonuclease HII.